The sequence spans 344 residues: uncharacterized protein (344 aa).

Over residues 323–332 (KQQEQREQGR) the composition is skewed to basic and acidic residues. The segment at 323–344 (KQQEQREQGRRAAYLQQRGMER) is disordered.

This is an uncharacterized protein from Bacillus anthracis.